A 164-amino-acid chain; its full sequence is uncharacterized protein (164 aa).

The disordered stretch occupies residues 107 to 136 (QSESGGSGSNSRSSSDTTEPTDPPAPVRKT).

This is an uncharacterized protein from Escherichia coli (Bacteriophage T4).